Consider the following 72-residue polypeptide: Translation initiation factor IF-1 (72 aa).

Residues 1–72 form the S1-like domain; sequence MAKDDVIEID…DKGRITYRYK (72 aa).

Belongs to the IF-1 family. In terms of assembly, component of the 30S ribosomal translation pre-initiation complex which assembles on the 30S ribosome in the order IF-2 and IF-3, IF-1 and N-formylmethionyl-tRNA(fMet); mRNA recruitment can occur at any time during PIC assembly.

Its subcellular location is the cytoplasm. Its function is as follows. One of the essential components for the initiation of protein synthesis. Stabilizes the binding of IF-2 and IF-3 on the 30S subunit to which N-formylmethionyl-tRNA(fMet) subsequently binds. Helps modulate mRNA selection, yielding the 30S pre-initiation complex (PIC). Upon addition of the 50S ribosomal subunit IF-1, IF-2 and IF-3 are released leaving the mature 70S translation initiation complex. This is Translation initiation factor IF-1 from Campylobacter fetus subsp. fetus (strain 82-40).